Reading from the N-terminus, the 626-residue chain is MVAPWRVSVRVCLSHLRCFELRQGLSLLRPSECPRDARLCWLLLGTLPKVVSLCGDVGEGAPDVLSRRRVRCSGAAGAGPAESLPRAGPLGGVFLHLRLWLRAGALLVKFFPLLLLYPLTYLAPSVSTLWLHLLLKATETSGPTYIKLGQWASTRRDLFSEAFCAQFSKLHVRVTPHPWTHTERFLRQAFGDDWGSILSFENREPVGSGCVAQVYKAYANTAFLETDSVQRLGRASCLPPFSHTGAVGGLRELFGYLGNGRKPPENLADQSFLERLLLPKADLVGSNAGVSRAQVPGHQPEATNLISVAVKVLHPGLLAQVHMDLLLMKIGSRVLGVLPGIKWLSLPEIVEEFEKLMVQQIDLRYEAQNLEHFQVNFRNVKAVKFPTPLRPFVTREVLVETYEESVPVSSYQQAGIPVDLKRKIARLGINMLLKMIFVDNFVHADLHPGNILVQGANGLSSSQEAQLQQADICDTLVVAVPSSLCPLRLVLLDAGIVAELQAPDLRNFRAVFMAVVMGQGQRVAELILHHARASECRDVEGFKTEMAMLVTQARKNTITLEKLHVSSLLSSVFKLLMTHKVKLESNFASIVFAIMVLEGLGRSLDPKLDILEAARPFLLTGPVCPP.

A helical transmembrane segment spans residues 103-123 (AGALLVKFFPLLLLYPLTYLA). In terms of domain architecture, Protein kinase spans 200–618 (FENREPVGSG…DILEAARPFL (419 aa)). ATP is bound by residues 206–214 (VGSGCVAQV) and lysine 311. Catalysis depends on aspartate 445, which acts as the Proton acceptor.

Belongs to the protein kinase superfamily. ADCK protein kinase family.

It localises to the mitochondrion. The protein localises to the membrane. Functionally, the function of this protein is not yet clear. It is not known if it has protein kinase activity and what type of substrate it would phosphorylate (Ser, Thr or Tyr). Involved in the mitochondrial import of CoQ precursors, plays a role in muscle mitochondrial function and fatty acid beta-oxidation. This is an uncharacterized protein from Homo sapiens (Human).